The primary structure comprises 892 residues: Polyribonucleotide nucleotidyltransferase (892 aa).

Positions 407–427 are disordered; sequence YMHNYEMPPYSTGETGRVGSP. The Mg(2+) site is built by aspartate 521 and aspartate 527. Positions 587-646 constitute a KH domain; the sequence is PRIITTTVPVDKIGEVIGPKGKMINQIQEDTGAEIAIEDDGTVYISSEGGEAAEKAKEII. An S1 motif domain is found at 658 to 730; the sequence is GETYNGKVVK…DRGKISLAIP (73 aa). A disordered region spans residues 727–892; it reads LAIPGFEDQE…VRRDFDPFED (166 aa). 2 stretches are compositionally biased toward basic and acidic residues: residues 739–844 and 851–877; these read APRR…DRRS and RRDD…ERSE.

The protein belongs to the polyribonucleotide nucleotidyltransferase family. Requires Mg(2+) as cofactor.

The protein localises to the cytoplasm. The enzyme catalyses RNA(n+1) + phosphate = RNA(n) + a ribonucleoside 5'-diphosphate. In terms of biological role, involved in mRNA degradation. Catalyzes the phosphorolysis of single-stranded polyribonucleotides processively in the 3'- to 5'-direction. The polypeptide is Polyribonucleotide nucleotidyltransferase (Bifidobacterium adolescentis (strain ATCC 15703 / DSM 20083 / NCTC 11814 / E194a)).